The sequence spans 666 residues: Probable potassium transport system protein Kup (666 aa).

Helical transmembrane passes span 16–36 (GFII…LYTM), 58–78 (ISLI…LIAL), 100–120 (PWLI…GALT), 149–169 (IITT…GTGF), 173–193 (IFGP…FFNM), 221–241 (IFIL…YSDL), 253–273 (WPFV…WILA), 294–314 (VYLV…LISG), 343–363 (LYIP…VLAF), 373–393 (YGLA…YYLI), 399–419 (PILA…FFLA), and 424–444 (FMHG…VMFI).

It belongs to the HAK/KUP transporter (TC 2.A.72) family.

It localises to the cell membrane. The enzyme catalyses K(+)(in) + H(+)(in) = K(+)(out) + H(+)(out). Functionally, transport of potassium into the cell. Likely operates as a K(+):H(+) symporter. This chain is Probable potassium transport system protein Kup, found in Streptococcus pyogenes serotype M3 (strain ATCC BAA-595 / MGAS315).